The following is a 335-amino-acid chain: NADH-quinone oxidoreductase subunit H (335 aa).

The next 8 helical transmembrane spans lie at 12–32 (IIAV…GALL), 81–101 (VIFT…FAVI), 114–134 (IGLL…LFAG), 154–174 (VSYE…VGSF), 187–207 (LWFI…GVAV), 238–258 (FFVG…TLFF), 270–290 (SLAF…FILL), and 307–327 (WKFC…IVLL).

It belongs to the complex I subunit 1 family. As to quaternary structure, NDH-1 is composed of 13 different subunits. Subunits NuoA, H, J, K, L, M, N constitute the membrane sector of the complex.

It localises to the cell inner membrane. It catalyses the reaction a quinone + NADH + 5 H(+)(in) = a quinol + NAD(+) + 4 H(+)(out). Its function is as follows. NDH-1 shuttles electrons from NADH, via FMN and iron-sulfur (Fe-S) centers, to quinones in the respiratory chain. The immediate electron acceptor for the enzyme in this species is believed to be ubiquinone. Couples the redox reaction to proton translocation (for every two electrons transferred, four hydrogen ions are translocated across the cytoplasmic membrane), and thus conserves the redox energy in a proton gradient. This subunit may bind ubiquinone. This is NADH-quinone oxidoreductase subunit H from Pseudomonas syringae pv. syringae (strain B728a).